The sequence spans 90 residues: Probable Fe(2+)-trafficking protein (90 aa).

It belongs to the Fe(2+)-trafficking protein family.

Its function is as follows. Could be a mediator in iron transactions between iron acquisition and iron-requiring processes, such as synthesis and/or repair of Fe-S clusters in biosynthetic enzymes. This Pseudomonas syringae pv. tomato (strain ATCC BAA-871 / DC3000) protein is Probable Fe(2+)-trafficking protein.